The chain runs to 208 residues: MAQETNHSQVPMLCSTGCGFYGNPRTNGMCSVCYKEHLQRQNSSNGRISPPAPSVTSLSESLPVQCTDGSVPEAQSALDSTASSVQPSPVSNQSLLSESVASSQVDSTSVDKAIPETEDLQASVSETAQQASEEQSKSLEKPKQKKNRCFMCRKKVGLTGFECRCGNVYCGVHRYSDVHNCSYNYKADAAEKIRKENPVVVGEKIQKI.

The A20-type zinc finger occupies 8 to 42 (SQVPMLCSTGCGFYGNPRTNGMCSVCYKEHLQRQN). C14, C18, C30, and C33 together coordinate Zn(2+). The interval 41–110 (QNSSNGRISP…ASSQVDSTSV (70 aa)) is disordered. Phosphoserine is present on S49. Positions 54 to 68 (SVTSLSESLPVQCTD) are enriched in polar residues. Residues 83–94 (SSVQPSPVSNQS) show a composition bias toward low complexity. Positions 95–110 (LLSESVASSQVDSTSV) are enriched in polar residues. The segment at 143 to 189 (KQKKNRCFMCRKKVGLTGFECRCGNVYCGVHRYSDVHNCSYNYKADA) adopts an AN1-type zinc-finger fold. The Zn(2+) site is built by C149, C152, C163, C165, C170, H173, H179, and C181. K204 bears the N6-acetyllysine mark.

In terms of assembly, interacts with PKN1.

The polypeptide is AN1-type zinc finger protein 6 (ZFAND6) (Bos taurus (Bovine)).